Consider the following 208-residue polypeptide: Uracil phosphoribosyltransferase (208 aa).

5-phospho-alpha-D-ribose 1-diphosphate is bound by residues Arg78, Arg103, and 130–138 (DPMFATGGT). Residues Ile193 and 198–200 (GDA) each bind uracil. Asp199 serves as a coordination point for 5-phospho-alpha-D-ribose 1-diphosphate.

The protein belongs to the UPRTase family. Requires Mg(2+) as cofactor.

It carries out the reaction UMP + diphosphate = 5-phospho-alpha-D-ribose 1-diphosphate + uracil. It participates in pyrimidine metabolism; UMP biosynthesis via salvage pathway; UMP from uracil: step 1/1. Its activity is regulated as follows. Allosterically activated by GTP. In terms of biological role, catalyzes the conversion of uracil and 5-phospho-alpha-D-ribose 1-diphosphate (PRPP) to UMP and diphosphate. The polypeptide is Uracil phosphoribosyltransferase (Campylobacter jejuni (strain RM1221)).